Reading from the N-terminus, the 195-residue chain is Imidazoleglycerol-phosphate dehydratase (195 aa).

Belongs to the imidazoleglycerol-phosphate dehydratase family.

It localises to the cytoplasm. It catalyses the reaction D-erythro-1-(imidazol-4-yl)glycerol 3-phosphate = 3-(imidazol-4-yl)-2-oxopropyl phosphate + H2O. It functions in the pathway amino-acid biosynthesis; L-histidine biosynthesis; L-histidine from 5-phospho-alpha-D-ribose 1-diphosphate: step 6/9. The sequence is that of Imidazoleglycerol-phosphate dehydratase from Haloarcula marismortui (strain ATCC 43049 / DSM 3752 / JCM 8966 / VKM B-1809) (Halobacterium marismortui).